Here is a 167-residue protein sequence, read N- to C-terminus: RNA pyrophosphohydrolase (167 aa).

Residues 8-158 (PYRRNVGAML…KRDIYRTLVR (151 aa)) form the Nudix hydrolase domain. The short motif at 49 to 70 (GGIDADEDPEEAVLRELREEIG) is the Nudix box element.

The protein belongs to the Nudix hydrolase family. RppH subfamily. A divalent metal cation serves as cofactor.

Functionally, accelerates the degradation of transcripts by removing pyrophosphate from the 5'-end of triphosphorylated RNA, leading to a more labile monophosphorylated state that can stimulate subsequent ribonuclease cleavage. This Gluconacetobacter diazotrophicus (strain ATCC 49037 / DSM 5601 / CCUG 37298 / CIP 103539 / LMG 7603 / PAl5) protein is RNA pyrophosphohydrolase.